The primary structure comprises 487 residues: PPE family protein PPE10 (487 aa).

Low complexity predominate over residues 398–424; the sequence is APVGGLDSGNPNPGSGSAAAGSGANPG. The disordered stretch occupies residues 398–487; the sequence is APVGGLDSGN…PRIGQPVGSE (90 aa). Polar residues predominate over residues 428-446; it reads PGTSYPSFVNSGSNDSGLR.

Belongs to the mycobacterial PPE family.

Its subcellular location is the secreted. Plays a major role in the integrity and stability of the capsule. This is PPE family protein PPE10 (PPE10) from Mycobacterium tuberculosis (strain CDC 1551 / Oshkosh).